Reading from the N-terminus, the 334-residue chain is Glycerol-3-phosphate dehydrogenase [NAD(P)+] (334 aa).

3 residues coordinate NADPH: Ser13, Phe14, and Lys108. 3 residues coordinate sn-glycerol 3-phosphate: Lys108, Gly137, and Thr139. Ala141 serves as a coordination point for NADPH. Residues Lys193, Asp246, Ser256, Arg257, and Asn258 each coordinate sn-glycerol 3-phosphate. The active-site Proton acceptor is Lys193. An NADPH-binding site is contributed by Arg257. Positions 281 and 283 each coordinate NADPH.

It belongs to the NAD-dependent glycerol-3-phosphate dehydrogenase family.

The protein resides in the cytoplasm. It carries out the reaction sn-glycerol 3-phosphate + NAD(+) = dihydroxyacetone phosphate + NADH + H(+). The enzyme catalyses sn-glycerol 3-phosphate + NADP(+) = dihydroxyacetone phosphate + NADPH + H(+). It functions in the pathway membrane lipid metabolism; glycerophospholipid metabolism. Functionally, catalyzes the reduction of the glycolytic intermediate dihydroxyacetone phosphate (DHAP) to sn-glycerol 3-phosphate (G3P), the key precursor for phospholipid synthesis. This is Glycerol-3-phosphate dehydrogenase [NAD(P)+] from Bartonella tribocorum (strain CIP 105476 / IBS 506).